We begin with the raw amino-acid sequence, 147 residues long: 6-pyruvoyl tetrahydrobiopterin synthase (147 aa).

Position 26 (His-26) interacts with Zn(2+). The Proton acceptor role is filled by Cys-45. 2 residues coordinate Zn(2+): His-51 and His-53. Residues His-92 and Glu-136 each act as charge relay system in the active site.

The protein belongs to the PTPS family. Homohexamer formed of two homotrimers in a head to head fashion. Zn(2+) is required as a cofactor.

The enzyme catalyses 7,8-dihydroneopterin 3'-triphosphate = 6-pyruvoyl-5,6,7,8-tetrahydropterin + triphosphate + H(+). It functions in the pathway cofactor biosynthesis; tetrahydrobiopterin biosynthesis; tetrahydrobiopterin from 7,8-dihydroneopterin triphosphate: step 1/3. In terms of biological role, involved in the biosynthesis of tetrahydrobiopterin, an essential cofactor of aromatic amino acid hydroxylases. Catalyzes the transformation of 7,8-dihydroneopterin triphosphate into 6-pyruvoyl tetrahydropterin. This chain is 6-pyruvoyl tetrahydrobiopterin synthase (pts), found in Poecilia reticulata (Guppy).